Here is a 311-residue protein sequence, read N- to C-terminus: tRNA dimethylallyltransferase (311 aa).

12–19 serves as a coordination point for ATP; the sequence is GPTASGKT. Substrate is bound at residue 14-19; sequence TASGKT. Interaction with substrate tRNA regions lie at residues 37-40 and 161-165; these read DSAM and QRIQR.

Belongs to the IPP transferase family. In terms of assembly, monomer. The cofactor is Mg(2+).

It catalyses the reaction adenosine(37) in tRNA + dimethylallyl diphosphate = N(6)-dimethylallyladenosine(37) in tRNA + diphosphate. Catalyzes the transfer of a dimethylallyl group onto the adenine at position 37 in tRNAs that read codons beginning with uridine, leading to the formation of N6-(dimethylallyl)adenosine (i(6)A). This is tRNA dimethylallyltransferase from Coxiella burnetii (strain Dugway 5J108-111).